The chain runs to 310 residues: Glutaminase (310 aa).

Serine 67, asparagine 118, glutamate 161, asparagine 168, tyrosine 192, tyrosine 244, and valine 262 together coordinate substrate.

Belongs to the glutaminase family. In terms of assembly, homotetramer.

The enzyme catalyses L-glutamine + H2O = L-glutamate + NH4(+). The chain is Glutaminase from Legionella pneumophila (strain Paris).